A 202-amino-acid polypeptide reads, in one-letter code: Putative pituitary tumor-transforming gene 3 protein (202 aa).

Residues 61–64 carry the D-box motif; sequence RKAL. The short motif at 163–173 is the SH3-binding element; the sequence is PPSPLKMPSPP.

This sequence belongs to the securin family.

It is found in the cytoplasm. The protein resides in the nucleus. The sequence is that of Putative pituitary tumor-transforming gene 3 protein (PTTG3) from Pan troglodytes (Chimpanzee).